Consider the following 348-residue polypeptide: Phosphate acyltransferase (348 aa).

The protein belongs to the PlsX family. Homodimer. Probably interacts with PlsY.

The protein localises to the cytoplasm. The enzyme catalyses a fatty acyl-[ACP] + phosphate = an acyl phosphate + holo-[ACP]. It participates in lipid metabolism; phospholipid metabolism. Functionally, catalyzes the reversible formation of acyl-phosphate (acyl-PO(4)) from acyl-[acyl-carrier-protein] (acyl-ACP). This enzyme utilizes acyl-ACP as fatty acyl donor, but not acyl-CoA. The protein is Phosphate acyltransferase of Pectobacterium carotovorum subsp. carotovorum (strain PC1).